The primary structure comprises 146 residues: Large ribosomal subunit protein uL15 (146 aa).

The segment at 1 to 56 (MKLHELRAAEGANKASKRVGRGTGSGLGKTSGRGQNGQNSRSGGGVRPGFEGGQMP) is disordered. 2 stretches are compositionally biased toward gly residues: residues 21–35 (RGTG…GRGQ) and 42–52 (SGGGVRPGFEG).

It belongs to the universal ribosomal protein uL15 family. As to quaternary structure, part of the 50S ribosomal subunit.

Functionally, binds to the 23S rRNA. The protein is Large ribosomal subunit protein uL15 of Clostridium botulinum (strain Okra / Type B1).